We begin with the raw amino-acid sequence, 60 residues long: MPRLKVTQVRSGIGGTAEQRDTLRSLGLKRLRDTVVKEDRPEIRGMIRAVAHLVRVEEVE.

The protein belongs to the universal ribosomal protein uL30 family. As to quaternary structure, part of the 50S ribosomal subunit.

The protein is Large ribosomal subunit protein uL30 of Acidothermus cellulolyticus (strain ATCC 43068 / DSM 8971 / 11B).